Consider the following 632-residue polypeptide: Actin-related protein 8 (632 aa).

Over residues 1–30 (MTQAEREQENGKEKEKEREKEKEKEKEQRG) the composition is skewed to basic and acidic residues. Residues 1–43 (MTQAEREQENGKEKEKEREKEKEKEKEQRGIKRPIAPPVIPEP) form a disordered region. 288 to 291 (DVGD) is an ATP binding site. Disordered stretches follow at residues 410-429 (MTSL…DEHY) and 434-494 (QSKQ…GGAE). Residues 434-443 (QSKQDQSSKA) show a composition bias toward low complexity.

This sequence belongs to the actin family. ARP8 subfamily. In terms of assembly, component of the chromatin remodeling INO80 complex; specifically part of a complex module associated with the DBINO domain of INO80. Exists as monomers and dimers, but the dimer is most probably the biologically relevant form required for stable interactions with histones that exploits the twofold symmetry of the nucleosome core.

It is found in the nucleus. The protein localises to the chromosome. Plays an important role in the functional organization of mitotic chromosomes. Exhibits low basal ATPase activity, and unable to polymerize. In terms of biological role, proposed core component of the chromatin remodeling INO80 complex which is involved in transcriptional regulation, DNA replication and probably DNA repair. Required for the recruitment of INO80 (and probably the INO80 complex) to sites of DNA damage Strongly prefer nucleosomes and H3-H4 tetramers over H2A-H2B dimers, suggesting it may act as a nucleosome recognition module within the complex. This chain is Actin-related protein 8 (actr8), found in Salmo salar (Atlantic salmon).